A 288-amino-acid chain; its full sequence is 18S rRNA aminocarboxypropyltransferase (288 aa).

S-adenosyl-L-methionine-binding residues include serine 43, valine 91, leucine 114, and tryptophan 129. Residues 209-221 (IWSAGNLNHKPTL) are compositionally biased toward polar residues. Residues 209 to 267 (IWSAGNLNHKPTLNTSSTHSNSEESRSPLHEPSEASLAHDEHSIPTDDNEETLTNLQAN) form a disordered region. Residues 229–253 (NSEESRSPLHEPSEASLAHDEHSIP) show a composition bias toward basic and acidic residues.

The protein belongs to the TDD superfamily. TSR3 family.

The protein resides in the cytoplasm. Its subcellular location is the nucleus. It catalyses the reaction an N(1)-methylpseudouridine in rRNA + S-adenosyl-L-methionine = N(1)-methyl-N(3)-[(3S)-3-amino-3-carboxypropyl]pseudouridine in rRNA + S-methyl-5'-thioadenosine + H(+). The enzyme catalyses N(1)-methylpseudouridine(1191) in yeast 18S rRNA + S-adenosyl-L-methionine = N(1)-methyl-N(3)-[(3S)-3-amino-3-carboxypropyl]pseudouridine(1191) in yeast 18S rRNA + S-methyl-5'-thioadenosine + H(+). Aminocarboxypropyltransferase that catalyzes the aminocarboxypropyl transfer on pseudouridine at position 1191 (Psi1191) in 18S rRNA. It constitutes the last step in biosynthesis of the hypermodified N1-methyl-N3-(3-amino-3-carboxypropyl) pseudouridine (m1acp3-Psi) conserved in eukaryotic 18S rRNA. Required for processing 35S pre-rRNA at site D. This chain is 18S rRNA aminocarboxypropyltransferase, found in Schizosaccharomyces pombe (strain 972 / ATCC 24843) (Fission yeast).